Here is a 434-residue protein sequence, read N- to C-terminus: UDP-N-acetylmuramate--L-alanine ligase (434 aa).

Gly108–Thr114 is a binding site for ATP.

Belongs to the MurCDEF family.

It is found in the cytoplasm. It carries out the reaction UDP-N-acetyl-alpha-D-muramate + L-alanine + ATP = UDP-N-acetyl-alpha-D-muramoyl-L-alanine + ADP + phosphate + H(+). The protein operates within cell wall biogenesis; peptidoglycan biosynthesis. Its function is as follows. Cell wall formation. This is UDP-N-acetylmuramate--L-alanine ligase from Geobacillus thermodenitrificans (strain NG80-2).